A 269-amino-acid chain; its full sequence is Myelin protein zero-like protein 1 (269 aa).

The first 35 residues, 1–35, serve as a signal peptide directing secretion; it reads MAASAGAGAVIAAPDSRRWLWSVLAAALGLLTAGV. The Ig-like V-type domain maps to 36-146; that stretch reads SALEVYTPKE…VKNPPDIVVQ (111 aa). At 36–162 the chain is on the extracellular side; that stretch reads SALEVYTPKE…YVVEKENLPV (127 aa). N-linked (GlcNAc...) asparagine glycosylation is found at Asn50 and Asn130. A disulfide bridge links Cys58 with Cys135. A helical transmembrane segment spans residues 163–183; the sequence is FPVWVVVGIVTAVVLGLTLLI. The Cytoplasmic portion of the chain corresponds to 184–269; sequence SMILAVLYRR…SVVYADIRKN (86 aa). A disordered region spans residues 199-238; that stretch reads DYTGCSTSESLSPVKQAPRKSPSDTEGLVKSLPSGSHQGP. The span at 202–211 shows a compositional bias: polar residues; sequence GCSTSESLSP. Residues Ser204, Ser206, Ser208, Ser210, Ser219, and Ser221 each carry the phosphoserine modification. Positions 239–244 match the ITIM motif 1 motif; the sequence is VIYAQL. Tyr241 bears the Phosphotyrosine mark. Ser260 is modified (phosphoserine). An ITIM motif 2 motif is present at residues 261 to 266; the sequence is VVYADI. Position 263 is a phosphotyrosine (Tyr263).

The protein belongs to the myelin P0 protein family. As to quaternary structure, interacts with phosphorylated PTPN11/SHP-2. In terms of processing, phosphorylated on tyrosine residues upon stimulation with pervanadate and concanavalin-A (ConA). Phosphorylation at Tyr-241 and Tyr-263 is required for interaction with PTPN11/SHP-2. Dephosphorylated by PTPN11/SHP-2 (in vitro). N-glycosylated. N-glycosylation is required for concanavalin A binding. Widely expressed with highest levels in heart, placenta, kidney and pancreas. Isoform 3 is relatively abundant in hematopoietic tissues and fetal liver. Isoform 1 and isoform 3 are expressed in CD14- PB monocytes and pre-B cell progenitors. Isoform 3 appears to be the major isoform in CD34- promyelocytic and promonocytic cells. During differentiation in monocytic cells, the expression level of isoform 3 decreases and that of isoform 1 increases. Isoform 1 is prominent in stromal cells and, to a lesser extent, in umbilical vein endothelial cells and erythroid progenitors. Isoform 2 is expressed in a erythroid progenitor cell line.

The protein resides in the membrane. Functionally, cell surface receptor, which is involved in signal transduction processes. Recruits PTPN11/SHP-2 to the cell membrane and is a putative substrate of PTPN11/SHP-2. Is a major receptor for concanavalin-A (ConA) and is involved in cellular signaling induced by ConA, which probably includes Src family tyrosine-protein kinases. Isoform 3 seems to have a dominant negative role; it blocks tyrosine phosphorylation of MPZL1 induced by ConA. Isoform 1, but not isoform 2 and isoform 3, may be involved in regulation of integrin-mediated cell motility. The polypeptide is Myelin protein zero-like protein 1 (MPZL1) (Homo sapiens (Human)).